Consider the following 182-residue polypeptide: UPF0316 protein BCB4264_A3368 (182 aa).

3 helical membrane passes run 6–26 (LIFVLQIIYVPILTIRTILLV), 32–52 (SAAGVGLLEGAIYIVSLGIVF), and 58–78 (WMNIVAYVIGFSAGLLLGGYI).

It belongs to the UPF0316 family.

It localises to the cell membrane. In Bacillus cereus (strain B4264), this protein is UPF0316 protein BCB4264_A3368.